A 401-amino-acid chain; its full sequence is tRNA (guanine-N(7)-)-methyltransferase non-catalytic subunit wuho (401 aa).

The interval 45–85 (KGRPRKYFDADSDSDEEQQNGDEPGTGKNNGGGDTGKKDQD) is disordered. The segment covering 54-64 (ADSDSDEEQQN) has biased composition (acidic residues). WD repeat units follow at residues 86–125 (DQTN…RTLK), 174–213 (GHMS…NIET), and 217–255 (GHTE…ELAR).

This sequence belongs to the WD repeat TRM82 family. Forms a heterodimer with the catalytic subunit.

The protein resides in the nucleus. It functions in the pathway tRNA modification; N(7)-methylguanine-tRNA biosynthesis. Its function is as follows. Required for the formation of N(7)-methylguanine at position 46 (m7G46) in tRNA. In the complex, it is required to stabilize and induce conformational changes of the catalytic subunit. This is tRNA (guanine-N(7)-)-methyltransferase non-catalytic subunit wuho from Culex quinquefasciatus (Southern house mosquito).